The sequence spans 210 residues: Floral homeotic protein FBP1 (210 aa).

Positions 3–57 (RGKIEIKRIENSSNRQVTYSKRRNGILKKAKEISVLCDARVSVIIFASSGKMHEF) constitute an MADS-box domain. Residues 82–173 (HENLDNEINK…QLEIATMNRN (92 aa)) enclose the K-box domain.

In terms of tissue distribution, petals.

The protein localises to the nucleus. In terms of biological role, probable transcription factor. This Petunia hybrida (Petunia) protein is Floral homeotic protein FBP1 (FBP1).